Reading from the N-terminus, the 468-residue chain is Zinc finger protein 672 (468 aa).

4 C2H2-type zinc fingers span residues 15-37 (YSCS…ERAH), 43-65 (FRCL…RWTH), 71-93 (YICS…LGTH), and 100-123 (CPCR…VRQH). The C2H2-type 5; degenerate zinc finger occupies 129-151 (HRCPLCARSFRQSALPFHLARAH). 9 consecutive C2H2-type zinc fingers follow at residues 167-189 (YHCT…SRIH), 202-224 (HRCG…LQRH), 230-252 (FKCP…QRTH), 258-280 (YACN…QRSH), 286-308 (HICA…QRSH), 314-336 (FPCP…LRTH), 342-364 (YHCE…LRNH), 370-392 (HKCP…RKTH), and 398-420 (AECT…QRSH).

The protein belongs to the krueppel C2H2-type zinc-finger protein family.

It localises to the nucleus. In terms of biological role, may be involved in transcriptional regulation. This is Zinc finger protein 672 (Znf672) from Rattus norvegicus (Rat).